The chain runs to 110 residues: Large ribosomal subunit protein bL20 (110 aa).

It belongs to the bacterial ribosomal protein bL20 family.

Its function is as follows. Binds directly to 23S ribosomal RNA and is necessary for the in vitro assembly process of the 50S ribosomal subunit. It is not involved in the protein synthesizing functions of that subunit. The chain is Large ribosomal subunit protein bL20 from Shigella boydii serotype 4 (strain Sb227).